Consider the following 302-residue polypeptide: Aspartate carbamoyltransferase catalytic subunit (302 aa).

Arg-53 and Thr-54 together coordinate carbamoyl phosphate. Position 82 (Lys-82) interacts with L-aspartate. 3 residues coordinate carbamoyl phosphate: Arg-103, His-131, and Gln-134. L-aspartate contacts are provided by Arg-164 and Arg-223. Carbamoyl phosphate contacts are provided by Leu-260 and Pro-261.

The protein belongs to the aspartate/ornithine carbamoyltransferase superfamily. ATCase family. Heterooligomer of catalytic and regulatory chains.

The enzyme catalyses carbamoyl phosphate + L-aspartate = N-carbamoyl-L-aspartate + phosphate + H(+). The protein operates within pyrimidine metabolism; UMP biosynthesis via de novo pathway; (S)-dihydroorotate from bicarbonate: step 2/3. In terms of biological role, catalyzes the condensation of carbamoyl phosphate and aspartate to form carbamoyl aspartate and inorganic phosphate, the committed step in the de novo pyrimidine nucleotide biosynthesis pathway. This is Aspartate carbamoyltransferase catalytic subunit from Methanococcus vannielii (strain ATCC 35089 / DSM 1224 / JCM 13029 / OCM 148 / SB).